Here is a 614-residue protein sequence, read N- to C-terminus: Two-component response regulator ORR33 (614 aa).

The region spanning 14-139 (RVMIIDDDAK…VMARLWRVVA (126 aa)) is the Response regulatory domain. Asp67 is modified (4-aspartylphosphate). The tract at residues 193 to 220 (RQLTINVVDDGNRGSGSGGGGGGGADAN) is disordered. The span at 205–217 (RGSGSGGGGGGGA) shows a compositional bias: gly residues.

Belongs to the ARR family. Type-B subfamily. In terms of processing, two-component system major event consists of a His-to-Asp phosphorelay between a sensor histidine kinase (HK) and a response regulator (RR). In plants, the His-to-Asp phosphorelay involves an additional intermediate named Histidine-containing phosphotransfer protein (HPt). This multistep phosphorelay consists of a His-Asp-His-Asp sequential transfer of a phosphate group between first a His and an Asp of the HK protein, followed by the transfer to a conserved His of the HPt protein and finally the transfer to an Asp in the receiver domain of the RR protein.

Its function is as follows. Functions as a response regulator involved in His-to-Asp phosphorelay signal transduction system. Phosphorylation of the Asp residue in the receiver domain activates the ability of the protein to promote the transcription of target genes. May directly activate some type-A response regulators in response to cytokinins. The sequence is that of Two-component response regulator ORR33 from Oryza sativa subsp. indica (Rice).